Consider the following 459-residue polypeptide: uncharacterized protein (459 aa).

Residues 5-63 enclose the TRAM domain; that stretch reads PVEEGQKFPLTIRRMGINGEGIGYFKKAVVFVPGAITGEEVVVEAVKVRDRFTEAKLNK. The [4Fe-4S] cluster site is built by C76, C82, C85, and C166. S-adenosyl-L-methionine contacts are provided by Q290, Y319, D340, and D388. Residue C415 is the Nucleophile of the active site.

The protein belongs to the class I-like SAM-binding methyltransferase superfamily. RNA M5U methyltransferase family.

This is an uncharacterized protein from Listeria monocytogenes serovar 1/2a (strain ATCC BAA-679 / EGD-e).